The chain runs to 310 residues: Protein BIG GRAIN 1 (310 aa).

Residues 77–140 (SYRARAPGPH…EKKAKKPGAS (64 aa)) are disordered. Positions 90 to 106 (SSSSECSSYGGFSSSEA) are enriched in low complexity.

Belongs to the BIG GRAIN 1 (BG1) plant protein family. In terms of tissue distribution, mostly expressed in the vascular tissues of leaves, culms and young panicles, especially in hulls.

The protein localises to the cell membrane. In terms of biological role, involved in auxin transport. Positive regulator of the auxin signaling pathway involved in gravitropism, plant growth and grain development. In Oryza sativa subsp. japonica (Rice), this protein is Protein BIG GRAIN 1.